A 658-amino-acid chain; its full sequence is MRGCLQTVRWLTSAWQRPPSYPPLSRAAPCRFFNVSIPRNEQSRKPVSDLERRIAAIPIDRFRNFCIVAHVDHGKSTLSDRLLELTGTIQPGGNKQVLDKLDVERERGITVKAQTCTMLYNYRGEDYLLHLVDTPGHVDFRAEVSRSYASCGGALLLVDASQGVQAQTVANFYLAFAEGLKLVPVINKVDLPSADPVRALDQMANTFELDPKTAVLVSAKTGQNVEQLLPTVVEQIPAPVGVHTKPLRMLLVDSWYSTYKGVILLVRIFDGEVRAGDHVGSLATGLKYHVGEVGIMYPGQTAQSVLRAGQVGYIYFNPAMKRSQEAKVGDTYTKVGSEKLIEPLPGFEEPKSMVFVAAYPVDASDFPHLEDSINQLLLNDRSITLQKESSEALGAGFRLGFLGTLHCSVFEDRLRQEHGASIIITPPTVPFKVIWKDGKEEIITNPALFPEEDALRAKVVELQEPFVLATLTFPEEYLGRVIELCESNRGEQKSLEFFTATQVILKYELPLAQLVDDFFGKLKGSTKGYASLDYEESGWRRSSIAKLQLLVNKVPVDAVSRVVHSSQVQKLGRVWVSKFKEHVDRQMFEVVIQAAVGRNIVARETIKPFRKDVLQKLHAADVTRRRKLLEKQKEGRKKLKAVGNVVIEHKAFQAFLAK.

A mitochondrion-targeting transit peptide spans 1-40 (MRGCLQTVRWLTSAWQRPPSYPPLSRAAPCRFFNVSIPRN). The 181-residue stretch at 60 to 240 (DRFRNFCIVA…TVVEQIPAPV (181 aa)) folds into the tr-type G domain. Residues 69 to 76 (AHVDHGKS), 133 to 137 (DTPGH), and 187 to 190 (NKVD) each bind GTP.

The protein belongs to the TRAFAC class translation factor GTPase superfamily. Classic translation factor GTPase family. LepA subfamily.

Its subcellular location is the mitochondrion inner membrane. The catalysed reaction is GTP + H2O = GDP + phosphate + H(+). Promotes mitochondrial protein synthesis. May act as a fidelity factor of the translation reaction, by catalyzing a one-codon backward translocation of tRNAs on improperly translocated ribosomes. Binds to mitochondrial ribosomes in a GTP-dependent manner. This chain is Translation factor GUF1, mitochondrial, found in Paracoccidioides brasiliensis (strain Pb18).